The primary structure comprises 1514 residues: ABC transporter C family member 5 (1514 aa).

A run of 10 helical transmembrane segments spans residues 16 to 36, 76 to 96, 111 to 131, 142 to 162, 177 to 197, 312 to 332, 334 to 354, 421 to 441, 446 to 466, and 533 to 553; these read LLELCSVIINLLLFLVFLFAV, FGFNLSLLCCLYVLGVQVLVL, FVLCFPASQSLAWFVLSFLVL, PFLVRIWWFLAFSICLCTMYV, SHVVANLAVTPALGFLCFLAW, VFAGLNTLVSYVGPYLISYFV, YLGGKEIFPHEGYVLAGIFFT, WYLHDIWMLPMQIVLALAILY, IAAVATLVATIISILVTIPLA, and FIFWSSPIFVAAVTFATSIFL. The ABC transmembrane type-1 1 domain occupies 307-588; the sequence is AACNAVFAGL…FPDLVSMMAQ (282 aa). The ABC transporter 1 domain maps to 622–845; sequence IEIKDGVFCW…GTDFKALVSA (224 aa). 657 to 664 lines the ATP pocket; the sequence is GTVGSGKS. Residues 899–927 adopt a coiled-coil conformation; the sequence is ASDLKAIKEKKKKAKRSRKKQLVQEEERV. The next 6 membrane-spanning stretches (helical) occupy residues 946 to 966, 986 to 1006, 1078 to 1098, 1117 to 1137, 1155 to 1175, and 1180 to 1200; these read GALIPLIILAQAAFQFLQIAS, PTLLLIVYTALAFGSSVFIFV, IVAVMTNVTWQVFLLVVPVAV, IVSIQKSPIIHLFGESIAGAA, LLDCFVRPFFCSIAAIEWLCL, and LSTLVFAFCMVLLVSFPHGTI. The region spanning 949-1231 is the ABC transmembrane type-1 2 domain; it reads IPLIILAQAA…WILSFCKLEN (283 aa). Residues 1268-1502 form the ABC transporter 2 domain; it reads IELVDVKVRY…KSSMFLKLVT (235 aa). 1302–1309 provides a ligand contact to ATP; sequence GRTGSGKS.

The protein belongs to the ABC transporter superfamily. ABCC family. Conjugate transporter (TC 3.A.1.208) subfamily. As to expression, ubiquitous, mostly in vascular tissues and epidermis, including guard cells.

The protein resides in the membrane. The catalysed reaction is ATP + H2O + xenobioticSide 1 = ADP + phosphate + xenobioticSide 2.. Its activity is regulated as follows. (E(2)17G) transport activity in negatively regulated by organic anions such as oestradiol-3-sulfate, luteolin-7-O-diglucuronide-4'-O-glucuronide, glycocholate, vanadate and the sulfonylurea glibenclamide, and, to a lower extent, by bafilomycin A1, NH(4)Cl, GSH, GSSG and DNB-GS. Functionally, pump for glutathione S-conjugates. Involved in regulation of K(+) and Na(+) cell content. Mediates resistance to NaCl and Li(+), confers sensitivity to sulfonylurea drugs such as glibenclamide (inducer of stomatal opening), and required for stomatal opening regulation by auxin, abscisic acid (ABA) and external Ca(2+). Transports oestradiol-17-(beta-D-glucuronide) (E(2)17G). Involved in the root auxin content regulation that controls the transition from primary root elongation to lateral root formation. Plays a role in ABA-mediated germination inhibition. High-affinity inositol hexakisphosphate transporter that plays a role in guard cell signaling and phytic acid storage. Required for phytic acid accumulation in developing seeds. Phytic acid is the primary storage form of phosphorus in cereal grains and other plant seeds. The protein is ABC transporter C family member 5 (ABCC5) of Arabidopsis thaliana (Mouse-ear cress).